The chain runs to 505 residues: Probable RNA exonuclease NGL3 (505 aa).

Disordered stretches follow at residues 1–75 (MDSQ…FPTP) and 334–369 (RNGE…SFTA). The segment covering 10 to 23 (SPSQKESSSTSGLV) has biased composition (polar residues). The span at 36–54 (HRDQLSVDQIKKIREERAQ) shows a compositional bias: basic and acidic residues. Position 62 is a phosphoserine (Ser-62). Over residues 338 to 347 (ESDQDDEECD) the composition is skewed to acidic residues.

Belongs to the CCR4/nocturin family.

The protein is Probable RNA exonuclease NGL3 (NGL3) of Saccharomyces cerevisiae (strain ATCC 204508 / S288c) (Baker's yeast).